A 690-amino-acid chain; its full sequence is MTTETFLVEIGTEELPPKALRSLAESFATHFTAELDNANITHGDVSWFAAPRRLAIKVANMAKSQADRIVEKRGPAIAQAFDAEGKPTKAAEGWARGNGITVDQAERLSTDKGEWLFYRAEVKGEAVNQLLAGMVSNALAKLPIPKLMRWGDKETHFVRPVHTVTLLLGDTLIDGEILGVQSARIIRGHRFMGEAEFTIDNADQYPEILYERGKVIADYENRKSIILHDARLAAEKLGGVADLSDSLVEEVTSLVEWPVVLTAKFEEKFLEVPAEALVYTMKGDQKYFPVYDKQGALLPHFIFVSNIESSDPQQIISGNEKVVRPRLADAEFFFKTDRKQRLEDNLPRLETVLFQKNLGSLRDKTDRIQALAGFIAEKMGADVNKATRAGLLSKCDLMTNMVFEFTDTQGVMGMHYARHDGEDEEVAVALKEQYQPRFAGDALPSNPVASAVAIAEKMDTLAGIFGIGQHPKGDKDPFALRRAALGVLRIIVEQDLPLDIEELTQEAARLYGDKLTNQNVVSDVVEFMLGRFRAWYQELGYSIDTIQAVLARRPTQPADFNARVKAVTYFRTLEEAAALAEANKRVSNILAKSADVKLNDKVLASVLKAPEEVQLAANLSVLQDKLAPLFAERKYQEALVELASLRDVVNNFFDKVMVMDKDEEIRVNRLTMLHELRELFLKVADISVLQ.

The protein belongs to the class-II aminoacyl-tRNA synthetase family. In terms of assembly, tetramer of two alpha and two beta subunits.

It localises to the cytoplasm. It catalyses the reaction tRNA(Gly) + glycine + ATP = glycyl-tRNA(Gly) + AMP + diphosphate. This is Glycine--tRNA ligase beta subunit from Proteus mirabilis (strain HI4320).